The sequence spans 177 residues: Adenine phosphoribosyltransferase (177 aa).

The protein belongs to the purine/pyrimidine phosphoribosyltransferase family. In terms of assembly, homodimer.

It is found in the cytoplasm. It catalyses the reaction AMP + diphosphate = 5-phospho-alpha-D-ribose 1-diphosphate + adenine. Its pathway is purine metabolism; AMP biosynthesis via salvage pathway; AMP from adenine: step 1/1. Functionally, catalyzes a salvage reaction resulting in the formation of AMP, that is energically less costly than de novo synthesis. This is Adenine phosphoribosyltransferase from Chlorobaculum tepidum (strain ATCC 49652 / DSM 12025 / NBRC 103806 / TLS) (Chlorobium tepidum).